The following is a 272-amino-acid chain: Shikimate dehydrogenase (NADP(+)) (272 aa).

Shikimate contacts are provided by residues 14–16 and Thr61; that span reads SKS. The active-site Proton acceptor is the Lys65. NADP(+) is bound at residue Glu77. Shikimate is bound by residues Asn86 and Asp102. Residues 126-130, 149-154, and Met213 contribute to the NADP(+) site; these read GAGGA and NRTVSR. Tyr215 contacts shikimate. Gly237 provides a ligand contact to NADP(+).

This sequence belongs to the shikimate dehydrogenase family. Homodimer.

The catalysed reaction is shikimate + NADP(+) = 3-dehydroshikimate + NADPH + H(+). It functions in the pathway metabolic intermediate biosynthesis; chorismate biosynthesis; chorismate from D-erythrose 4-phosphate and phosphoenolpyruvate: step 4/7. Its function is as follows. Involved in the biosynthesis of the chorismate, which leads to the biosynthesis of aromatic amino acids. Catalyzes the reversible NADPH linked reduction of 3-dehydroshikimate (DHSA) to yield shikimate (SA). The protein is Shikimate dehydrogenase (NADP(+)) of Shigella sonnei (strain Ss046).